Here is a 213-residue protein sequence, read N- to C-terminus: uncharacterized protein (213 aa).

Coiled-coil stretches lie at residues 54–78 and 108–151; these read KEQT…NLKL and VKDV…STSK. A compositionally biased stretch (basic and acidic residues) spans 122 to 142; the sequence is IEKEKEEEKAAKKAEKAEEKK. The disordered stretch occupies residues 122 to 213; that stretch reads IEKEKEEEKA…FGGKPTGQIW (92 aa). Low complexity predominate over residues 146 to 188; the sequence is KNSTSKSGSKSSKSSSGSSKSSSKSSKSSKSSSGSSKSSSKSS. Residues 189-199 show a composition bias toward basic residues; sequence KNSKKSSKKSN.

This sequence belongs to the mimivirus R546 family.

This is an uncharacterized protein from Acanthamoeba polyphaga (Amoeba).